The primary structure comprises 173 residues: dCTP deaminase, dUMP-forming (173 aa).

DCTP contacts are provided by residues 93–98 (RSSTGR), Asp111, 119–121 (TLE), Gln138, and Tyr151. The active-site Proton donor/acceptor is the Glu121.

It belongs to the dCTP deaminase family. As to quaternary structure, homotrimer.

The enzyme catalyses dCTP + 2 H2O = dUMP + NH4(+) + diphosphate. It participates in pyrimidine metabolism; dUMP biosynthesis; dUMP from dCTP: step 1/1. Functionally, bifunctional enzyme that catalyzes both the deamination of dCTP to dUTP and the hydrolysis of dUTP to dUMP without releasing the toxic dUTP intermediate. The sequence is that of dCTP deaminase, dUMP-forming from Clostridium beijerinckii (strain ATCC 51743 / NCIMB 8052) (Clostridium acetobutylicum).